A 463-amino-acid polypeptide reads, in one-letter code: Argininosuccinate lyase (463 aa).

Belongs to the lyase 1 family. Argininosuccinate lyase subfamily.

The protein localises to the cytoplasm. The catalysed reaction is 2-(N(omega)-L-arginino)succinate = fumarate + L-arginine. It functions in the pathway amino-acid biosynthesis; L-arginine biosynthesis; L-arginine from L-ornithine and carbamoyl phosphate: step 3/3. This Chlorobaculum parvum (strain DSM 263 / NCIMB 8327) (Chlorobium vibrioforme subsp. thiosulfatophilum) protein is Argininosuccinate lyase.